We begin with the raw amino-acid sequence, 403 residues long: GPI-N-acetylgalactosamine transferase PGAP4 (403 aa).

Over 1–22 the chain is Cytoplasmic; that stretch reads MSTSTSPAAMLLRRLRRLSWGS. The chain crosses the membrane as a helical span at residues 23–43; that stretch reads TAVQLFILTVVTFGLLAPLAC. The Lumenal segment spans residues 44 to 259; sequence HRLLHSYFYL…RLQHYTNPEP (216 aa). Val-109 contributes to the UDP-N-acetyl-alpha-D-galactosamine binding site. 2 cysteine pairs are disulfide-bonded: Cys-132–Cys-136 and Cys-144–Cys-194. The short motif at 211-213 is the DXD motif element; sequence EDD. Residues 260–280 traverse the membrane as a helical segment; sequence MRILEWVGVGMLLGPLLTWIY. Topologically, residues 281-287 are cytoplasmic; that stretch reads MRFASRP. The chain crosses the membrane as a helical span at residues 288–308; it reads GFSWPVMLFFSLYSMGLVELV. The Lumenal segment spans residues 309–403; the sequence is GRHYFLELRR…LRYNFHPSLL (95 aa). Residues Cys-332 and Cys-333 are joined by a disulfide bond. Thr-334, Pro-335, and Lys-362 together coordinate UDP-N-acetyl-alpha-D-galactosamine.

This sequence belongs to the PGAP4 family. Post-translationally, glycosylated.

Its subcellular location is the golgi apparatus membrane. Golgi-resident glycosylphosphatidylinositol (GPI)-N-acetylgalactosamine transferase that catalyzes the N-acetyl-beta-D-galactosamine transfer from an UDP-N-acetyl-alpha-D-galactosamine to the 4-OH-position of first mannose of the glycosylphosphatidylinositol (GPI) of a GPI-anchored protein (GPI-AP). This modification occurs after the fatty acid remodeling step of the GPI-anchor maturation. This chain is GPI-N-acetylgalactosamine transferase PGAP4, found in Pongo abelii (Sumatran orangutan).